Consider the following 370-residue polypeptide: UDP-N-acetylglucosamine--N-acetylmuramyl-(pentapeptide) pyrophosphoryl-undecaprenol N-acetylglucosamine transferase (370 aa).

Residues 20 to 22, N134, R170, S204, I257, and Q301 each bind UDP-N-acetyl-alpha-D-glucosamine; that span reads TAG.

It belongs to the glycosyltransferase 28 family. MurG subfamily.

It localises to the cell membrane. It carries out the reaction di-trans,octa-cis-undecaprenyl diphospho-N-acetyl-alpha-D-muramoyl-L-alanyl-D-glutamyl-meso-2,6-diaminopimeloyl-D-alanyl-D-alanine + UDP-N-acetyl-alpha-D-glucosamine = di-trans,octa-cis-undecaprenyl diphospho-[N-acetyl-alpha-D-glucosaminyl-(1-&gt;4)]-N-acetyl-alpha-D-muramoyl-L-alanyl-D-glutamyl-meso-2,6-diaminopimeloyl-D-alanyl-D-alanine + UDP + H(+). It functions in the pathway cell wall biogenesis; peptidoglycan biosynthesis. In terms of biological role, cell wall formation. Catalyzes the transfer of a GlcNAc subunit on undecaprenyl-pyrophosphoryl-MurNAc-pentapeptide (lipid intermediate I) to form undecaprenyl-pyrophosphoryl-MurNAc-(pentapeptide)GlcNAc (lipid intermediate II). This is UDP-N-acetylglucosamine--N-acetylmuramyl-(pentapeptide) pyrophosphoryl-undecaprenol N-acetylglucosamine transferase from Corynebacterium jeikeium (strain K411).